The following is a 327-amino-acid chain: Apoptosis facilitator Bcl-2-like protein 14 (327 aa).

Ser44 is subject to Phosphoserine. The BH3 signature appears at 212 to 226 (IVELLKYSGDQLERK). The BH2 motif lies at 308–315 (WIQQHGGW).

Belongs to the Bcl-2 family. Phosphorylated by MELK, leading to inhibit its pro-apoptotic function. As to expression, isoform 1 is widely expressed. Isoform 2 is testis-specific.

It is found in the cytoplasm. It localises to the cytosol. The protein localises to the endomembrane system. In terms of biological role, plays a role in apoptosis. This is Apoptosis facilitator Bcl-2-like protein 14 (BCL2L14) from Homo sapiens (Human).